Reading from the N-terminus, the 106-residue chain is Thioredoxin (106 aa).

Lysine 3 bears the N6-acetyllysine mark. The Thioredoxin domain maps to 3-106 (KQIESKTAFQ…KLEATINELV (104 aa)). Lysine 8 carries the N6-succinyllysine modification. Active-site nucleophile residues include cysteine 32 and cysteine 35. A disulfide bridge links cysteine 32 with cysteine 35. Lysine 39 bears the N6-acetyllysine mark. S-nitrosocysteine is present on residues cysteine 62 and cysteine 69. At cysteine 73 the chain carries S-nitrosocysteine; alternate. Lysine 95 is modified (N6-acetyllysine; alternate). An N6-succinyllysine; alternate modification is found at lysine 95.

Belongs to the thioredoxin family. Homodimer; disulfide-linked. Interacts with TXNIP through the redox-active site. Interacts with MAP3K5 and CASP3. Interacts with APEX1; the interaction stimulates the FOS/JUN AP-1 DNA-binding activity in a redox-dependent manner. In terms of processing, in the fully reduced protein, both Cys-69 and Cys-73 are nitrosylated in response to nitric oxide (NO). When two disulfide bonds are present in the protein, only Cys-73 is nitrosylated. Cys-73 can serve as donor for nitrosylation of target proteins.

It localises to the nucleus. The protein localises to the cytoplasm. Its subcellular location is the secreted. Its function is as follows. Participates in various redox reactions through the reversible oxidation of its active center dithiol to a disulfide and catalyzes dithiol-disulfide exchange reactions. Plays a role in the reversible S-nitrosylation of cysteine residues in target proteins, and thereby contributes to the response to intracellular nitric oxide. Nitrosylates the active site Cys of CASP3 in response to nitric oxide (NO), and thereby inhibits caspase-3 activity. Induces the FOS/JUN AP-1 DNA binding activity in ionizing radiation (IR) cells through its oxidation/reduction status and stimulates AP-1 transcriptional activity. This Pongo abelii (Sumatran orangutan) protein is Thioredoxin (TXN).